Here is a 225-residue protein sequence, read N- to C-terminus: NAD(P)H-quinone oxidoreductase subunit K, chloroplastic (225 aa).

The [4Fe-4S] cluster site is built by cysteine 43, cysteine 44, cysteine 108, and cysteine 139.

Belongs to the complex I 20 kDa subunit family. In terms of assembly, NDH is composed of at least 16 different subunits, 5 of which are encoded in the nucleus. Requires [4Fe-4S] cluster as cofactor.

It is found in the plastid. The protein resides in the chloroplast thylakoid membrane. It catalyses the reaction a plastoquinone + NADH + (n+1) H(+)(in) = a plastoquinol + NAD(+) + n H(+)(out). The enzyme catalyses a plastoquinone + NADPH + (n+1) H(+)(in) = a plastoquinol + NADP(+) + n H(+)(out). Its function is as follows. NDH shuttles electrons from NAD(P)H:plastoquinone, via FMN and iron-sulfur (Fe-S) centers, to quinones in the photosynthetic chain and possibly in a chloroplast respiratory chain. The immediate electron acceptor for the enzyme in this species is believed to be plastoquinone. Couples the redox reaction to proton translocation, and thus conserves the redox energy in a proton gradient. The protein is NAD(P)H-quinone oxidoreductase subunit K, chloroplastic of Triticum aestivum (Wheat).